The primary structure comprises 415 residues: Lipoyl synthase, apicoplast (415 aa).

The signal sequence occupies residues 1–23 (MHFGIPSLFYLYILFSIIMRIKC). Positions 153, 158, 164, 179, 183, 186, and 394 each coordinate [4Fe-4S] cluster. In terms of domain architecture, Radical SAM core spans 165–383 (WNIGTATIML…KEEGLKMGFK (219 aa)).

Belongs to the radical SAM superfamily. Lipoyl synthase family. The cofactor is [4Fe-4S] cluster.

The protein localises to the plastid. It localises to the apicoplast. The enzyme catalyses [[Fe-S] cluster scaffold protein carrying a second [4Fe-4S](2+) cluster] + N(6)-octanoyl-L-lysyl-[protein] + 2 oxidized [2Fe-2S]-[ferredoxin] + 2 S-adenosyl-L-methionine + 4 H(+) = [[Fe-S] cluster scaffold protein] + N(6)-[(R)-dihydrolipoyl]-L-lysyl-[protein] + 4 Fe(3+) + 2 hydrogen sulfide + 2 5'-deoxyadenosine + 2 L-methionine + 2 reduced [2Fe-2S]-[ferredoxin]. Its pathway is protein modification; protein lipoylation via endogenous pathway; protein N(6)-(lipoyl)lysine from octanoyl-[acyl-carrier-protein]: step 2/2. In terms of biological role, catalyzes the radical-mediated insertion of two sulfur atoms into the C-6 and C-8 positions of the octanoyl moiety bound to the lipoyl domains of lipoate-dependent enzymes, thereby converting the octanoylated domains into lipoylated derivatives. This chain is Lipoyl synthase, apicoplast, found in Plasmodium falciparum (isolate 3D7).